The following is a 45-amino-acid chain: Large ribosomal subunit protein bL34 (45 aa).

This sequence belongs to the bacterial ribosomal protein bL34 family.

The protein is Large ribosomal subunit protein bL34 of Salinispora arenicola (strain CNS-205).